The following is a 643-amino-acid chain: Leukocyte immunoglobulin-like receptor subfamily B member 5 (643 aa).

The signal sequence occupies residues 1 to 23; that stretch reads MTLTLSVLICLGLNVGPRTCVQA. At 24-458 the chain is on the extracellular side; the sequence is GTLPKPTLWA…PQSGLGRHLG (435 aa). 4 consecutive Ig-like C2-type domains span residues 27-116, 111-228, 224-313, and 337-418; these read PKPT…LELV, DPLE…SLLI, PSLL…DPLD, and GENV…LVVS. A disulfide bridge connects residues C49 and C98. The N-linked (GlcNAc...) asparagine glycan is linked to N139. Cystine bridges form between C144–C195 and C244–C295. N-linked (GlcNAc...) asparagine glycans are attached at residues N279 and N339. C344 and C395 are disulfide-bonded. The span at 417–433 shows a compositional bias: low complexity; the sequence is VSGPSGDPSLSPTGSTP. Positions 417–449 are disordered; it reads VSGPSGDPSLSPTGSTPTPGPEDQPLTPTGLDP. A helical transmembrane segment spans residues 459–479; that stretch reads VVTGVSVAFVLLLFLLLFLLL. At 480–643 the chain is on the cytoplasmic side; that stretch reads RHRHQSKHRT…PSIYAPLAIH (164 aa). Positions 493-643 are disordered; that stretch reads FYRPAGAAGP…PSIYAPLAIH (151 aa). Position 514 is a phosphoserine (S514). Composition is skewed to basic and acidic residues over residues 531-549, 557-567, and 579-592; these read TQPK…RDED, EVKHSRPRREM, and LDTK…DRQM. Residues 605-610 carry the ITIM motif 1 motif; sequence VTYAQL. The segment covering 615 to 631 has biased composition (basic and acidic residues); that stretch reads LRREATEPPPSQEREPP. An ITIM motif 2 motif is present at residues 635–640; that stretch reads SIYAPL.

The protein resides in the membrane. May act as receptor for class I MHC antigens. The chain is Leukocyte immunoglobulin-like receptor subfamily B member 5 (LILRB5) from Pan troglodytes (Chimpanzee).